Here is a 199-residue protein sequence, read N- to C-terminus: Recombination protein RecR (199 aa).

The C4-type zinc finger occupies 58 to 73 (CKKCFNLTSEDECEIC). A Toprim domain is found at 81-175 (KLICVVSETK…KVTRIAYGLP (95 aa)).

This sequence belongs to the RecR family.

Its function is as follows. May play a role in DNA repair. It seems to be involved in an RecBC-independent recombinational process of DNA repair. It may act with RecF and RecO. In Prochlorococcus marinus (strain AS9601), this protein is Recombination protein RecR.